Reading from the N-terminus, the 629-residue chain is Protein SPT2 homolog (629 aa).

An important for interaction with DNA region spans residues 1–522; it reads MDFDSVLSIA…SGHRILVKPS (522 aa). Positions 45 to 72 form a coiled coil; the sequence is QAFLKKKAVEQKNKEQQDKKAKEDLLAK. Residues 53-93 are compositionally biased toward basic and acidic residues; that stretch reads VEQKNKEQQDKKAKEDLLAKRVELKSDRKARAMASRTKDNF. 3 disordered regions span residues 53-181, 206-533, and 608-629; these read VEQK…ASSS, KTEE…TSSY, and EDEE…KKRK. A compositionally biased stretch (polar residues) spans 111 to 123; it reads KGSSTEEQQSSTK. Over residues 127–144 the composition is skewed to acidic residues; the sequence is GDYDDEDNFDYEGTDSES. Positions 203–228 form a coiled coil; sequence VVKKTEERLRTAEEIRELEMERRVKK. 2 stretches are compositionally biased toward basic and acidic residues: residues 206–247 and 257–277; these read KTEE…KDSR and KHVD…EKHQ. Composition is skewed to polar residues over residues 278-297, 305-327, 335-345, 353-364, 387-398, 437-450, and 462-490; these read SSST…TPTS, SNSG…SFQA, SQGQRPATPSD, VSLTQAKSSISG, SNFSTSGPSQKP, NLQS…SRAS, and SGSQ…TKNI. Residues 523 to 629 form an important for interaction with histones region; it reads GPALPPITSS…MQRKNAKKRK (107 aa). A coiled-coil region spans residues 591–629; it reads WKEQQKEEARSLRMAVLEDEEEERRELEEMQRKNAKKRK.

The protein belongs to the SPT2 family. As to quaternary structure, interacts with histones. Interacts with a heterotetrameric complex formed by histone H3 and H4, especially when the histone tetramer is not bound to DNA.

It is found in the nucleus. The protein localises to the nucleolus. Functionally, histone chaperone that stabilizes pre-existing histone tetramers and regulates replication-independent histone exchange on chromatin. Required for normal chromatin refolding in the coding region of transcribed genes, and for the suppression of spurious transcription. Binds DNA and histones and promotes nucleosome assembly (in vitro). Facilitates formation of tetrameric histone complexes containing histone H3 and H4. Modulates RNA polymerase 1-mediated transcription. Binds DNA, with a preference for branched DNA species, such as Y-form DNA and Holliday junction DNA. This is Protein SPT2 homolog (spty2d1) from Danio rerio (Zebrafish).